The sequence spans 137 residues: Molluscan insulin-related peptide 2 (137 aa).

Positions Met1–Gly31 are cleaved as a signal peptide. The residue at position 32 (Gln32) is a Pyrrolidone carboxylic acid. Intrachain disulfides connect Cys47/Cys123, Cys59/Cys136, and Cys122/Cys127. A propeptide spans Asp71 to Val83 (C-beta peptide like). Residues Asn86–Thr110 constitute a propeptide, C-alpha peptide like. The residue at position 113 (Gln113) is a Pyrrolidone carboxylic acid.

Belongs to the insulin family. In terms of assembly, heterodimer of a B chain and an A chain linked by two disulfide bonds. As to expression, expressed in the cerebral light-green cells which are giant neuroendocrines cells involved in the control of growth.

The protein resides in the cytoplasmic vesicle. It localises to the secretory vesicle. In Lymnaea stagnalis (Great pond snail), this protein is Molluscan insulin-related peptide 2.